The chain runs to 432 residues: MADIIIKNAYVLTMDPDAGDLKNGTVVIEDGKITEIGENTKENADTVIDAKGSVVMPGLANTHTHAAMTLFRGYADDLQLAEWLEKHIWPAEAQLKAEDVYKGSLLACLEMIKSGTTSFADMYFYMDETAKAVEASGLRASLSHGLIELWNEEKGEADLKEGKRFVRAWQGAADGRIKTMYGPHAPNTCSEEFLTKVKEEAHRDGAGLHIHVLETEAELNAMKERYGKCSVHLLEDIGFFGPDVLAAHCVWLSDGDIEILRQREVNVSHNPISNMKLASGIAPVYKMLEKGVNVTLGTDGCASNNNLDLFEEIKTAALLHKVSTGNPTALPARQVLEMATVNGAKALGTETGMLKVGKKADMIVVDMKKPHLTPCFDVPSHLVYSAKGCDVRTTIVDGKVLMDNYRVLVMDEEKVIEEARTAAEELVARANA.

Zn(2+) is bound by residues His-63 and His-65. Substrate-binding residues include Glu-92 and His-184. Residue His-211 coordinates Zn(2+). Substrate contacts are provided by Glu-214 and Asp-299. Asp-299 contributes to the Zn(2+) binding site.

Belongs to the metallo-dependent hydrolases superfamily. MTA/SAH deaminase family. As to quaternary structure, homotetramer. It depends on Zn(2+) as a cofactor.

The enzyme catalyses 5'-deoxyadenosine + H2O + H(+) = 5'-deoxyinosine + NH4(+). It carries out the reaction S-adenosyl-L-homocysteine + H2O + H(+) = S-inosyl-L-homocysteine + NH4(+). It catalyses the reaction S-methyl-5'-thioadenosine + H2O + H(+) = S-methyl-5'-thioinosine + NH4(+). The catalysed reaction is adenosine + H2O + H(+) = inosine + NH4(+). Its pathway is amino-acid biosynthesis; S-adenosyl-L-methionine biosynthesis. Its function is as follows. Catalyzes the deamination of three SAM-derived enzymatic products, namely 5'-deoxyadenosine, S-adenosyl-L-homocysteine, and 5'-methylthioadenosine, to produce the inosine analogs. Can also deaminate adenosine. The preferred substrate for this enzyme is 5'-deoxyadenosine, but all these substrates are efficiently deaminated. Likely functions in a S-adenosyl-L-methionine (SAM) recycling pathway from S-adenosyl-L-homocysteine (SAH) produced from SAM-dependent methylation reactions. May also be involved in the recycling of 5'-deoxyadenosine, whereupon the 5'-deoxyribose moiety of 5'-deoxyinosine is further metabolized to deoxyhexoses used for the biosynthesis of aromatic amino acids in methanogens. The protein is 5'-deoxyadenosine deaminase of Methanosarcina acetivorans (strain ATCC 35395 / DSM 2834 / JCM 12185 / C2A).